Consider the following 263-residue polypeptide: Acyl-[acyl-carrier-protein]--UDP-N-acetylglucosamine O-acyltransferase (263 aa).

This sequence belongs to the transferase hexapeptide repeat family. LpxA subfamily. As to quaternary structure, homotrimer.

Its subcellular location is the cytoplasm. It carries out the reaction a (3R)-hydroxyacyl-[ACP] + UDP-N-acetyl-alpha-D-glucosamine = a UDP-3-O-[(3R)-3-hydroxyacyl]-N-acetyl-alpha-D-glucosamine + holo-[ACP]. The protein operates within glycolipid biosynthesis; lipid IV(A) biosynthesis; lipid IV(A) from (3R)-3-hydroxytetradecanoyl-[acyl-carrier-protein] and UDP-N-acetyl-alpha-D-glucosamine: step 1/6. In terms of biological role, involved in the biosynthesis of lipid A, a phosphorylated glycolipid that anchors the lipopolysaccharide to the outer membrane of the cell. The polypeptide is Acyl-[acyl-carrier-protein]--UDP-N-acetylglucosamine O-acyltransferase (Aeromonas salmonicida (strain A449)).